Consider the following 635-residue polypeptide: Beta-mannosyltransferase 2 (635 aa).

At 1–6 (MRTRLN) the chain is on the cytoplasmic side. Residues 7–27 (FLLLCIASVLSVIWIGVLLTW) traverse the membrane as a helical segment. Residues 28–635 (NDNNLGGISL…EKKEAEKKGK (608 aa)) are Extracellular-facing. Asparagine 484 is a glycosylation site (N-linked (GlcNAc...) asparagine). Residues 512 to 635 (TRGEAERRRR…EKKEAEKKGK (124 aa)) adopt a coiled-coil conformation. The interval 517-635 (ERRRRVAEER…EKKEAEKKGK (119 aa)) is disordered.

It belongs to the BMT family.

Its subcellular location is the membrane. Its function is as follows. Beta-mannosyltransferase involved in cell wall biosynthesis. Initiates the beta-mannosylation of core N-linked glycans. The chain is Beta-mannosyltransferase 2 (BMT2) from Komagataella phaffii (strain ATCC 76273 / CBS 7435 / CECT 11047 / NRRL Y-11430 / Wegner 21-1) (Yeast).